Reading from the N-terminus, the 274-residue chain is Receptor-like protein 44 (274 aa).

An N-terminal signal peptide occupies residues 1 to 24 (MTRSHRLLLLLLLIFQTAQRLTTA). The Extracellular portion of the chain corresponds to 25 to 223 (DPNDEACLKN…PLQEMMMKSK (199 aa)). N-linked (GlcNAc...) asparagine glycans are attached at residues N48, N82, and N95. 4 LRR repeats span residues 96–121 (CTNL…QYLV), 123–144 (LAVL…LALC), 145–168 (AYLN…LGLL), and 169–192 (ARLS…LSNR). Residue N127 is glycosylated (N-linked (GlcNAc...) asparagine). N-linked (GlcNAc...) asparagine glycosylation is found at N191 and N200. Residues 224–244 (GLSVMAIVGIGLGSGIASLMI) form a helical membrane-spanning segment. Residues 245-274 (SFTGVCLWLRITEKKIVEEEGKISQSMPDY) lie on the Cytoplasmic side of the membrane.

The protein belongs to the RLP family.

It localises to the cell membrane. This Arabidopsis thaliana (Mouse-ear cress) protein is Receptor-like protein 44.